The chain runs to 415 residues: Phosphoglycerate kinase (415 aa).

Substrate is bound by residues 27–29 (DVN), Arg-44, 67–70 (HQGR), Arg-124, and Arg-164. ATP is bound by residues Glu-336 and 362–365 (GGHM).

The protein belongs to the phosphoglycerate kinase family. Monomer.

It is found in the cytoplasm. It carries out the reaction (2R)-3-phosphoglycerate + ATP = (2R)-3-phospho-glyceroyl phosphate + ADP. It participates in carbohydrate degradation; glycolysis; pyruvate from D-glyceraldehyde 3-phosphate: step 2/5. The polypeptide is Phosphoglycerate kinase (Sulfolobus acidocaldarius (strain ATCC 33909 / DSM 639 / JCM 8929 / NBRC 15157 / NCIMB 11770)).